The chain runs to 126 residues: Large ribosomal subunit protein bL19 (126 aa).

Belongs to the bacterial ribosomal protein bL19 family.

This protein is located at the 30S-50S ribosomal subunit interface and may play a role in the structure and function of the aminoacyl-tRNA binding site. This chain is Large ribosomal subunit protein bL19, found in Bordetella bronchiseptica (strain ATCC BAA-588 / NCTC 13252 / RB50) (Alcaligenes bronchisepticus).